Consider the following 239-residue polypeptide: tRNA (guanine-N(1)-)-methyltransferase (239 aa).

S-adenosyl-L-methionine contacts are provided by residues Gly110 and 130 to 135; that span reads VGDYVL.

It belongs to the RNA methyltransferase TrmD family. As to quaternary structure, homodimer.

It localises to the cytoplasm. It carries out the reaction guanosine(37) in tRNA + S-adenosyl-L-methionine = N(1)-methylguanosine(37) in tRNA + S-adenosyl-L-homocysteine + H(+). Functionally, specifically methylates guanosine-37 in various tRNAs. The protein is tRNA (guanine-N(1)-)-methyltransferase of Borrelia turicatae (strain 91E135).